A 447-amino-acid chain; its full sequence is Adenylosuccinate synthetase (447 aa).

GTP is bound by residues 35–41 (GDEGKGK) and 63–65 (GHT). The Proton acceptor role is filled by aspartate 36. Residues aspartate 36 and glycine 63 each contribute to the Mg(2+) site. IMP is bound by residues 36–39 (DEGK), 61–64 (NAGH), threonine 153, arginine 167, asparagine 245, threonine 260, and arginine 324. The active-site Proton donor is the histidine 64. 320–326 (VTTKRKR) contributes to the substrate binding site. GTP is bound by residues arginine 326, 352–354 (KLD), and 435–437 (GVG).

It belongs to the adenylosuccinate synthetase family. In terms of assembly, homodimer. It depends on Mg(2+) as a cofactor.

The protein resides in the cytoplasm. It catalyses the reaction IMP + L-aspartate + GTP = N(6)-(1,2-dicarboxyethyl)-AMP + GDP + phosphate + 2 H(+). Its pathway is purine metabolism; AMP biosynthesis via de novo pathway; AMP from IMP: step 1/2. In terms of biological role, plays an important role in the de novo pathway and in the salvage pathway of purine nucleotide biosynthesis. Catalyzes the first committed step in the biosynthesis of AMP from IMP. Plays a role in the regulation of adult life span. This chain is Adenylosuccinate synthetase, found in Drosophila melanogaster (Fruit fly).